The chain runs to 37 residues: Cytochrome b6-f complex subunit 5 (37 aa).

The chain crosses the membrane as a helical span at residues 5–25 (LLSGIVLGLIPITLLGLFVTA).

This sequence belongs to the PetG family. In terms of assembly, the 4 large subunits of the cytochrome b6-f complex are cytochrome b6, subunit IV (17 kDa polypeptide, PetD), cytochrome f and the Rieske protein, while the 4 small subunits are PetG, PetL, PetM and PetN. The complex functions as a dimer.

The protein localises to the plastid. It is found in the chloroplast thylakoid membrane. Functionally, component of the cytochrome b6-f complex, which mediates electron transfer between photosystem II (PSII) and photosystem I (PSI), cyclic electron flow around PSI, and state transitions. PetG is required for either the stability or assembly of the cytochrome b6-f complex. The polypeptide is Cytochrome b6-f complex subunit 5 (Marchantia polymorpha (Common liverwort)).